A 252-amino-acid polypeptide reads, in one-letter code: Imidazole glycerol phosphate synthase subunit HisF (252 aa).

Residues aspartate 11 and aspartate 130 contribute to the active site.

Belongs to the HisA/HisF family. As to quaternary structure, heterodimer of HisH and HisF.

It is found in the cytoplasm. The catalysed reaction is 5-[(5-phospho-1-deoxy-D-ribulos-1-ylimino)methylamino]-1-(5-phospho-beta-D-ribosyl)imidazole-4-carboxamide + L-glutamine = D-erythro-1-(imidazol-4-yl)glycerol 3-phosphate + 5-amino-1-(5-phospho-beta-D-ribosyl)imidazole-4-carboxamide + L-glutamate + H(+). It participates in amino-acid biosynthesis; L-histidine biosynthesis; L-histidine from 5-phospho-alpha-D-ribose 1-diphosphate: step 5/9. IGPS catalyzes the conversion of PRFAR and glutamine to IGP, AICAR and glutamate. The HisF subunit catalyzes the cyclization activity that produces IGP and AICAR from PRFAR using the ammonia provided by the HisH subunit. This chain is Imidazole glycerol phosphate synthase subunit HisF, found in Petrotoga mobilis (strain DSM 10674 / SJ95).